A 386-amino-acid chain; its full sequence is Methylthioribose-1-phosphate isomerase (386 aa).

Residue Asp-258 is the Proton donor of the active site.

It belongs to the eIF-2B alpha/beta/delta subunits family. MtnA subfamily.

The protein resides in the cytoplasm. It is found in the nucleus. It catalyses the reaction 5-(methylsulfanyl)-alpha-D-ribose 1-phosphate = 5-(methylsulfanyl)-D-ribulose 1-phosphate. Its pathway is amino-acid biosynthesis; L-methionine biosynthesis via salvage pathway; L-methionine from S-methyl-5-thio-alpha-D-ribose 1-phosphate: step 1/6. In terms of biological role, catalyzes the interconversion of methylthioribose-1-phosphate (MTR-1-P) into methylthioribulose-1-phosphate (MTRu-1-P). The polypeptide is Methylthioribose-1-phosphate isomerase (Postia placenta (strain ATCC 44394 / Madison 698-R) (Brown rot fungus)).